Reading from the N-terminus, the 314-residue chain is Fibrinogen-like protein 1 (314 aa).

The first 22 residues, 1–22 (MGEIRSFLLVTIALMMGREIWA), serve as a signal peptide directing secretion. Positions 25 to 59 (NSKCLLEQERLRAQVQQLETRVKQQQARIAQLMHE) form a coiled coil. The Fibrinogen C-terminal domain occupies 76–308 (LGGKRQYADC…SVVMKIRPND (233 aa)). 2 disulfides stabilise this stretch: cysteine 85/cysteine 114 and cysteine 250/cysteine 263.

In terms of assembly, homodimer. Interacts (via the Fibrinogen C-terminal domain) with LAG3 (via Ig-like domains 1 and 2).

It localises to the secreted. Functionally, immune suppressive molecule that inhibits antigen-specific T-cell activation by acting as a major ligand of LAG3. Responsible for LAG3 T-cell inhibitory function. Binds LAG3 independently from MHC class II (MHC-II). Secreted by, and promotes growth of, hepatocytes. This chain is Fibrinogen-like protein 1, found in Mesocricetus auratus (Golden hamster).